The sequence spans 271 residues: Coiled-coil domain-containing protein ORF29 (271 aa).

Residues 1-39 (MNEKTESEIFEEQNSLYKPIKQEKKTPSTPESEDKNDQS) are disordered. Basic and acidic residues predominate over residues 20–37 (IKQEKKTPSTPESEDKND). A coiled-coil region spans residues 208–228 (RATQTQEILLNSLRKNLQMLE).

The protein is Coiled-coil domain-containing protein ORF29 of Helicobacter pylori (strain 35A).